We begin with the raw amino-acid sequence, 474 residues long: Alanine/serine racemase (474 aa).

Residues 139-140 and glutamine 282 each bind pyridoxal 5'-phosphate; that span reads GS. Lysine 308 carries the post-translational modification N6-(pyridoxal phosphate)lysine. Threonine 336 provides a ligand contact to pyridoxal 5'-phosphate.

The protein belongs to the class-III pyridoxal-phosphate-dependent aminotransferase family. In terms of assembly, homohexamer. The cofactor is pyridoxal 5'-phosphate.

The enzyme catalyses L-alanine = D-alanine. It carries out the reaction L-serine = D-serine. Completely inhibited by hydroxylamine hydrochloride. In terms of biological role, catalyzes the interconversion of L-alanine and D-alanine, and L-serine and D-serine. Has weak activity with valine and threonine. This Pyrococcus horikoshii (strain ATCC 700860 / DSM 12428 / JCM 9974 / NBRC 100139 / OT-3) protein is Alanine/serine racemase.